Consider the following 572-residue polypeptide: Phospholipase B-like protein B (572 aa).

The signal sequence occupies residues 1 to 28; it reads MNKLKSNFILNIVILFTILIFNINFINC. 6 N-linked (GlcNAc...) asparagine glycosylation sites follow: Asn-73, Asn-138, Asn-219, Asn-427, Asn-544, and Asn-564.

It belongs to the phospholipase B-like family.

The protein localises to the secreted. In terms of biological role, probable phospholipase. In Dictyostelium discoideum (Social amoeba), this protein is Phospholipase B-like protein B (plbB).